A 51-amino-acid chain; its full sequence is Ovomucoid (51 aa).

Residues 3–51 (VDCSGYPKPDCTLESFPLCGSDNQTYSNKCAFCNAAVERNVTLRHLGEC) form the Kazal-like domain. Disulfide bonds link C5–C35, C13–C32, and C21–C51. The N-linked (GlcNAc...) asparagine glycan is linked to N42.

Its subcellular location is the secreted. In Rhynchotus rufescens (Red-winged tinamou), this protein is Ovomucoid.